Reading from the N-terminus, the 111-residue chain is Ribonuclease P protein component (111 aa).

Belongs to the RnpA family. As to quaternary structure, consists of a catalytic RNA component (M1 or rnpB) and a protein subunit.

The catalysed reaction is Endonucleolytic cleavage of RNA, removing 5'-extranucleotides from tRNA precursor.. RNaseP catalyzes the removal of the 5'-leader sequence from pre-tRNA to produce the mature 5'-terminus. It can also cleave other RNA substrates such as 4.5S RNA. The protein component plays an auxiliary but essential role in vivo by binding to the 5'-leader sequence and broadening the substrate specificity of the ribozyme. This chain is Ribonuclease P protein component, found in Streptococcus thermophilus (strain ATCC BAA-491 / LMD-9).